Reading from the N-terminus, the 140-residue chain is Putative pre-16S rRNA nuclease (140 aa).

It belongs to the YqgF nuclease family.

The protein localises to the cytoplasm. Its function is as follows. Could be a nuclease involved in processing of the 5'-end of pre-16S rRNA. The polypeptide is Putative pre-16S rRNA nuclease (Vibrio cholerae serotype O1 (strain ATCC 39541 / Classical Ogawa 395 / O395)).